The sequence spans 1409 residues: Tensin-2 (1409 aa).

Positions 1–35 (MKSSGPVERLLRALGRRDSSRAASRPRKAEPHSFR) are disordered. Residues 9-20 (RLLRALGRRDSS) show a composition bias toward basic and acidic residues. The segment at 31 to 79 (PHSFREKVFRKKPPVCAVCKVTIDGTGVSCRVCKVATHRKCEAKVTSAC) adopts a Phorbol-ester/DAG-type zinc-finger fold. T91 bears the Phosphothreonine mark. A phosphoserine mark is found at S118 and S120. One can recognise a Phosphatase tensin-type domain in the interval 122–294 (DPLMERRWDL…SYFSGLLSGS (173 aa)). The active-site Phosphocysteine intermediate is the C231. The C2 tensin-type domain occupies 299–425 (SSPLFLHYVL…ASVEFVFSSS (127 aa)). S455 is subject to Phosphoserine. A Phosphotyrosine modification is found at Y456. Residues 462–536 (HHEDSVDGSL…SPGRPPPTAA (75 aa)) are disordered. S466 carries the phosphoserine modification. Residue T474 is modified to Phosphothreonine. At S481 the chain carries Phosphoserine. Y483 is subject to Phosphotyrosine. The span at 491–506 (RQTPPAPSPEPPPPPM) shows a compositional bias: pro residues. Omega-N-methylarginine is present on R555. Disordered stretches follow at residues 562–582 (AILD…GVYP), 812–1098 (PGEG…SSPA), and 1111–1130 (LSDN…QSNV). S820, S825, S830, S832, S835, and S845 each carry phosphoserine. 2 stretches are compositionally biased toward polar residues: residues 900–918 (SASS…SSPV) and 930–940 (RSPTSAPTQRL). T910 bears the Phosphothreonine mark. 3 positions are modified to phosphoserine: S931, S941, and S972. A compositionally biased stretch (pro residues) spans 968 to 982 (PLAPSPVSPTFPPSS). The residue at position 977 (T977) is a Phosphothreonine. S991 and S1003 each carry phosphoserine. Over residues 1046–1056 (PEPPQSSPTPA) the composition is skewed to pro residues. One can recognise an SH2 domain in the interval 1140–1247 (WYKPHLSRDQ…SLPCCLRIPS (108 aa)). T1182 carries the post-translational modification Phosphothreonine. S1247 is subject to Phosphoserine. Positions 1275–1408 (ACSVLYLTSV…FITKVLLGQR (134 aa)) constitute a PTB domain.

The protein belongs to the PTEN phosphatase protein family. Interacts with AXL. Interacts with SYK; leading to its phosphorylation. Interacts with SQSTM1 (via PB1 domain); the interaction leads to sequestration of TNS2 in cytoplasmic aggregates with SQSTM1 and promotes TNS2 ubiquitination and proteasomal degradation. In terms of processing, ubiquitinated following sequestration in cytoplasmic aggregates with SQSTM1, leading to proteasomal degradation. In terms of tissue distribution, detected in heart, kidney, brain, thymus, spleen, liver, placenta, lung, skeletal muscle and small intestine.

Its subcellular location is the cell junction. It localises to the focal adhesion. The protein resides in the cell membrane. The protein localises to the cytoplasm. The catalysed reaction is O-phospho-L-tyrosyl-[protein] + H2O = L-tyrosyl-[protein] + phosphate. Tyrosine-protein phosphatase which regulates cell motility, proliferation and muscle-response to insulin. Phosphatase activity is mediated by binding to phosphatidylinositol-3,4,5-triphosphate (PtdIns(3,4,5)P3) via the SH2 domain. In muscles and under catabolic conditions, dephosphorylates IRS1 leading to its degradation and muscle atrophy. Negatively regulates PI3K-AKT pathway activation. Dephosphorylates nephrin NPHS1 in podocytes which regulates activity of the mTORC1 complex. Under normal glucose conditions, NPHS1 outcompetes IRS1 for binding to phosphatidylinositol 3-kinase (PI3K) which balances mTORC1 activity but high glucose conditions lead to up-regulation of TNS2, increased NPHS1 dephosphorylation and activation of mTORC1, contributing to podocyte hypertrophy and proteinuria. Required for correct podocyte morphology, podocyte-glomerular basement membrane interaction and integrity of the glomerular filtration barrier. Enhances RHOA activation in the presence of DLC1. Plays a role in promoting DLC1-dependent remodeling of the extracellular matrix. In Homo sapiens (Human), this protein is Tensin-2 (TNS2).